The sequence spans 796 residues: Protein translocase subunit SecA 2 (796 aa).

Residues Gln-84, 102–106 (GEGKT), and Asp-496 contribute to the ATP site.

The protein belongs to the SecA family. As to quaternary structure, monomer and homodimer. Part of the essential Sec protein translocation apparatus which comprises SecA, SecYEG and auxiliary proteins SecDF. Other proteins may also be involved.

It is found in the cell membrane. It localises to the cytoplasm. The catalysed reaction is ATP + H2O + cellular proteinSide 1 = ADP + phosphate + cellular proteinSide 2.. Its function is as follows. Part of the Sec protein translocase complex. Interacts with the SecYEG preprotein conducting channel. Has a central role in coupling the hydrolysis of ATP to the transfer of proteins into and across the cell membrane, serving as an ATP-driven molecular motor driving the stepwise translocation of polypeptide chains across the membrane. The chain is Protein translocase subunit SecA 2 from Staphylococcus haemolyticus (strain JCSC1435).